The sequence spans 494 residues: tRNA-2-methylthio-N(6)-dimethylallyladenosine synthase (494 aa).

In terms of domain architecture, MTTase N-terminal spans 5–121 (RTYQVRTYGC…LPALLERARV (117 aa)). Residues cysteine 14, cysteine 50, cysteine 84, cysteine 158, cysteine 162, and cysteine 165 each contribute to the [4Fe-4S] cluster site. The 231-residue stretch at 144 to 374 (RESVYAAWVA…LELQERISEE (231 aa)) folds into the Radical SAM core domain. The 70-residue stretch at 377–446 (AKFVGREVEV…PHHLVADSGI (70 aa)) folds into the TRAM domain. The segment covering 458–468 (WEARNAPERRP) has biased composition (basic and acidic residues). The disordered stretch occupies residues 458-494 (WEARNAPERRPTGVLLGMPKVGAPEPQPSVVGGCCDS).

It belongs to the methylthiotransferase family. MiaB subfamily. As to quaternary structure, monomer. [4Fe-4S] cluster serves as cofactor.

The protein localises to the cytoplasm. It carries out the reaction N(6)-dimethylallyladenosine(37) in tRNA + (sulfur carrier)-SH + AH2 + 2 S-adenosyl-L-methionine = 2-methylsulfanyl-N(6)-dimethylallyladenosine(37) in tRNA + (sulfur carrier)-H + 5'-deoxyadenosine + L-methionine + A + S-adenosyl-L-homocysteine + 2 H(+). Functionally, catalyzes the methylthiolation of N6-(dimethylallyl)adenosine (i(6)A), leading to the formation of 2-methylthio-N6-(dimethylallyl)adenosine (ms(2)i(6)A) at position 37 in tRNAs that read codons beginning with uridine. This chain is tRNA-2-methylthio-N(6)-dimethylallyladenosine synthase, found in Thermobifida fusca (strain YX).